Reading from the N-terminus, the 233-residue chain is Small ribosomal subunit protein uS5 (233 aa).

Composition is skewed to basic and acidic residues over residues 1-12 and 39-54; these read MANESEIQKTEN and RGRD…RNEE. Residues 1–54 form a disordered region; it reads MANESEIQKTENAEVANAANGTNPNNERRGRGGRGRGGRGRDGRGRRDDRRNEE. An S5 DRBM domain is found at 59–122; it reads LIEKLVHINR…AAAKKTMIRV (64 aa).

The protein belongs to the universal ribosomal protein uS5 family. Part of the 30S ribosomal subunit. Contacts proteins S4 and S8.

Its function is as follows. With S4 and S12 plays an important role in translational accuracy. Located at the back of the 30S subunit body where it stabilizes the conformation of the head with respect to the body. The chain is Small ribosomal subunit protein uS5 from Zymomonas mobilis subsp. mobilis (strain ATCC 31821 / ZM4 / CP4).